A 451-amino-acid chain; its full sequence is Phosphoglucosamine mutase (451 aa).

Catalysis depends on serine 102, which acts as the Phosphoserine intermediate. 4 residues coordinate Mg(2+): serine 102, aspartate 243, aspartate 245, and aspartate 247. Position 102 is a phosphoserine (serine 102).

Belongs to the phosphohexose mutase family. The cofactor is Mg(2+). Activated by phosphorylation.

It catalyses the reaction alpha-D-glucosamine 1-phosphate = D-glucosamine 6-phosphate. Catalyzes the conversion of glucosamine-6-phosphate to glucosamine-1-phosphate. The sequence is that of Phosphoglucosamine mutase from Salinispora tropica (strain ATCC BAA-916 / DSM 44818 / JCM 13857 / NBRC 105044 / CNB-440).